The chain runs to 570 residues: Urease subunit alpha (570 aa).

Residues 131–570 form the Urease domain; that stretch reads GGMDSHIHFI…LPMAQRYFLF (440 aa). Residues histidine 136, histidine 138, and lysine 219 each coordinate Ni(2+). Lysine 219 carries the N6-carboxylysine modification. Residue histidine 221 participates in substrate binding. Residues histidine 248 and histidine 274 each coordinate Ni(2+). Histidine 322 serves as the catalytic Proton donor. Ni(2+) is bound at residue aspartate 362.

This sequence belongs to the metallo-dependent hydrolases superfamily. Urease alpha subunit family. As to quaternary structure, heterotrimer of UreA (gamma), UreB (beta) and UreC (alpha) subunits. Three heterotrimers associate to form the active enzyme. The cofactor is Ni cation. In terms of processing, carboxylation allows a single lysine to coordinate two nickel ions.

The protein localises to the cytoplasm. The catalysed reaction is urea + 2 H2O + H(+) = hydrogencarbonate + 2 NH4(+). It participates in nitrogen metabolism; urea degradation; CO(2) and NH(3) from urea (urease route): step 1/1. The sequence is that of Urease subunit alpha from Sinorhizobium medicae (strain WSM419) (Ensifer medicae).